The chain runs to 343 residues: Membrane progestin receptor delta (343 aa).

The Cytoplasmic segment spans residues 1–49 (MLSLKMPQLLRVHQVPRVFWEEGIMSGYRCPTSSALDCVLSSFQMTNET). Residues 50 to 70 (VNIWTHFLPTWYFLWRLLALG) form a helical membrane-spanning segment. Residues 71-79 (SPGFRADPY) lie on the Extracellular side of the membrane. A helical transmembrane segment spans residues 80-100 (HLPLLVFLLPACLYPFASCCA). Over 101 to 112 (HTFSSMSPRARH) the chain is Cytoplasmic. The helical transmembrane segment at 113–133 (ICYFLDYGALSLYSLGCAFPY) threads the bilayer. Residues 134–146 (AAYSMPASWLHSR) lie on the Extracellular side of the membrane. Residues 147-167 (LHQLFVPAAALNSFLCTGLSC) form a helical membrane-spanning segment. Residues 168 to 216 (YSRFPELEYPGFSKALRTAAFAYPFLFDNLPLFYRLRLCWGGAHSCGRD) are Cytoplasmic-facing. The chain crosses the membrane as a helical span at residues 217 to 237 (ALSSNHGYHLLCALLSGFLFA). At 238–257 (ARLPERLAPGRFDYIGHSHQ) the chain is on the extracellular side. A helical membrane pass occupies residues 258–278 (LFHICAVLGTHFQLEAVLADM). At 279–291 (GSRRAWLAVQEPT) the chain is on the cytoplasmic side. Residues 292–312 (LGLGATVATLSLAVIGNLFII) traverse the membrane as a helical segment. At 313–343 (AAFTASLLRMPGPCPLLQGSPLEEGLQAKQQ) the chain is on the extracellular side.

Belongs to the ADIPOR family. Homodimer.

The protein resides in the cell membrane. Its function is as follows. Plasma membrane progesterone (P4) receptor coupled to G proteins. Seems to act through a G(s) mediated pathway. Involved in neurosteroid inhibition of apoptosis. May be involved in regulating rapid P4 signaling in the nervous system. Also binds dehydroepiandrosterone (DHEA), pregnanolone, pregnenolone and allopregnanolone. The sequence is that of Membrane progestin receptor delta from Mus musculus (Mouse).